The chain runs to 314 residues: Diisopropyl-fluorophosphatase (314 aa).

Ca(2+)-binding residues include E21, N120, N175, D229, D232, L273, and H274. The Proton acceptor role is filled by H287.

Monomer. Requires Ca(2+) as cofactor.

The catalysed reaction is diisopropyl fluorophosphate + H2O = diisopropyl phosphate + fluoride + 2 H(+). Its activity is regulated as follows. Inhibited by chelating agents. Its function is as follows. Biological function and substrate unknown. However, it is capable of acting on phosphorus anhydride bonds (such as phosphorus-halide and phosphorus-cyanide) in organophosphorus compounds (including nerve gases). This Loligo vulgaris (Common European squid) protein is Diisopropyl-fluorophosphatase.